The sequence spans 210 residues: MKGRFFSFEGPDGAGKTTMITKLESFLREKGFDVLLTREPGGVRIAEEIRSIILNPKHTEMDGRTEALLYAAARRQHLLEKIIPAIKAGKIVLCDRFVDSSLAYQGFARGLGIDEILQINQFAIDGFFPSLTIYFDIDPKIGLERIQKNKQREINRLDMESLSFHYKVREGYLKIAERFSDRIIVIDASKPVDEVFAMTIAAVMDQIEGR.

10-17 serves as a coordination point for ATP; that stretch reads GPDGAGKT.

The protein belongs to the thymidylate kinase family.

The catalysed reaction is dTMP + ATP = dTDP + ADP. In terms of biological role, phosphorylation of dTMP to form dTDP in both de novo and salvage pathways of dTTP synthesis. The polypeptide is Thymidylate kinase (Geobacillus sp. (strain WCH70)).